Consider the following 213-residue polypeptide: Uracil phosphoribosyltransferase (213 aa).

Residues Arg78, Arg103, and Asp131 to Thr139 contribute to the 5-phospho-alpha-D-ribose 1-diphosphate site. Uracil contacts are provided by residues Ile197 and Gly202–Ala204. Asp203 is a 5-phospho-alpha-D-ribose 1-diphosphate binding site.

This sequence belongs to the UPRTase family. The cofactor is Mg(2+).

The catalysed reaction is UMP + diphosphate = 5-phospho-alpha-D-ribose 1-diphosphate + uracil. Its pathway is pyrimidine metabolism; UMP biosynthesis via salvage pathway; UMP from uracil: step 1/1. Allosterically activated by GTP. Catalyzes the conversion of uracil and 5-phospho-alpha-D-ribose 1-diphosphate (PRPP) to UMP and diphosphate. The polypeptide is Uracil phosphoribosyltransferase (Bifidobacterium longum subsp. infantis (strain ATCC 15697 / DSM 20088 / JCM 1222 / NCTC 11817 / S12)).